Here is a 454-residue protein sequence, read N- to C-terminus: Zeatin O-xylosyltransferase (454 aa).

It belongs to the UDP-glycosyltransferase family. As to expression, high level in young seeds, less in older seeds and very low in roots.

The catalysed reaction is zeatin + UDP-alpha-D-xylose = O-beta-D-xylosylzeatin + UDP + H(+). Utilizes UDP-xylose as the sugar donor and catalyzes the formation of o-xylosylzeatin from zeatin. Does not act on UDP-glucose. This Phaseolus vulgaris (Kidney bean) protein is Zeatin O-xylosyltransferase.